A 72-amino-acid chain; its full sequence is Conotoxin TxMMSK-04 (72 aa).

Residues methionine 1–alanine 20 form the signal peptide. Residues valine 21 to valine 51 constitute a propeptide that is removed on maturation. Glutamine 55 carries the pyrrolidone carboxylic acid modification. 3 disulfide bridges follow: cysteine 57–cysteine 71, cysteine 58–cysteine 67, and cysteine 63–cysteine 70. Residue proline 69 is modified to 4-hydroxyproline. Cysteine 71 bears the Cysteine amide mark.

Belongs to the conotoxin M superfamily. Expressed by the venom duct.

It is found in the secreted. The sequence is that of Conotoxin TxMMSK-04 from Conus textile (Cloth-of-gold cone).